We begin with the raw amino-acid sequence, 1124 residues long: Tyrosine-protein kinase JAK3 (1124 aa).

The interaction with cytokine/interferon/growth hormone receptors stretch occupies residues 1–223 (MAPPSEETPL…RRTVRRALRR (223 aa)). Serine 17 carries the phosphoserine modification. In terms of domain architecture, FERM spans 24 to 356 (GALHVLLPAR…GYFRLTTDSQ (333 aa)). Residues 375–475 (QCHGPITLDF…GVAVTLTSCC (101 aa)) form the SH2; atypical domain. The region spanning 521 to 781 (LEWHENLGHG…AVIRDLNSLI (261 aa)) is the Protein kinase 1 domain. At tyrosine 785 the chain carries Phosphotyrosine; by autocatalysis. The region spanning 822–1111 (LKYISQLGKG…SRGCETHAFT (290 aa)) is the Protein kinase 2 domain. ATP is bound by residues 828-836 (LGKGNFGSV) and lysine 855. Residues tyrosine 904 and tyrosine 939 each carry the phosphotyrosine modification. The Proton acceptor role is filled by aspartate 949. A phosphotyrosine; by autocatalysis mark is found at tyrosine 980 and tyrosine 981.

This sequence belongs to the protein kinase superfamily. Tyr protein kinase family. JAK subfamily. As to quaternary structure, interacts with STAM2 and MYO18A. Interacts with SHB. Interacts with CD69. Post-translationally, tyrosine phosphorylated in response to IL-2 and IL-4. Dephosphorylation of Tyr-980 and Tyr-981 by PTPN2 negatively regulates cytokine-mediated signaling. In terms of tissue distribution, in NK cells and an NK-like cell line but not in resting T-cells or in other tissues. The S-form is more commonly seen in hematopoietic lines, whereas the B-form is detected in cells both of hematopoietic and epithelial origins.

It localises to the endomembrane system. It is found in the cytoplasm. It carries out the reaction L-tyrosyl-[protein] + ATP = O-phospho-L-tyrosyl-[protein] + ADP + H(+). Non-receptor tyrosine kinase involved in various processes such as cell growth, development, or differentiation. Mediates essential signaling events in both innate and adaptive immunity and plays a crucial role in hematopoiesis during T-cells development. In the cytoplasm, plays a pivotal role in signal transduction via its association with type I receptors sharing the common subunit gamma such as IL2R, IL4R, IL7R, IL9R, IL15R and IL21R. Following ligand binding to cell surface receptors, phosphorylates specific tyrosine residues on the cytoplasmic tails of the receptor, creating docking sites for STATs proteins. Subsequently, phosphorylates the STATs proteins once they are recruited to the receptor. Phosphorylated STATs then form homodimer or heterodimers and translocate to the nucleus to activate gene transcription. For example, upon IL2R activation by IL2, JAK1 and JAK3 molecules bind to IL2R beta (IL2RB) and gamma chain (IL2RG) subunits inducing the tyrosine phosphorylation of both receptor subunits on their cytoplasmic domain. Then, STAT5A and STAT5B are recruited, phosphorylated and activated by JAK1 and JAK3. Once activated, dimerized STAT5 translocates to the nucleus and promotes the transcription of specific target genes in a cytokine-specific fashion. This Homo sapiens (Human) protein is Tyrosine-protein kinase JAK3.